Here is a 123-residue protein sequence, read N- to C-terminus: MPTIQQLIRSERQTIQKTKSPALKSCPQRRGVCTRVYTTTPKKPNSALRKVARVRLTSGFEVTAYIPGIGHNIQEHSVVLLRGGRVKDLPGVRYHIIRGTLDAAGVKNRKQSRSKYGAKKPKE.

Residues 103–123 are disordered; it reads AAGVKNRKQSRSKYGAKKPKE. Basic residues predominate over residues 107 to 123; sequence KNRKQSRSKYGAKKPKE.

Belongs to the universal ribosomal protein uS12 family. As to quaternary structure, part of the 30S ribosomal subunit.

It is found in the plastid. The protein resides in the chloroplast. Its function is as follows. With S4 and S5 plays an important role in translational accuracy. Located at the interface of the 30S and 50S subunits. This chain is Small ribosomal subunit protein uS12c (rps12), found in Guillardia theta (Cryptophyte).